Consider the following 1137-residue polypeptide: Phytochrome C (1137 aa).

Residues 1 to 18 (MSSSRSNNRATCSRSSSA) show a composition bias toward low complexity. Positions 1-27 (MSSSRSNNRATCSRSSSARSKHSARVV) are disordered. The GAF domain maps to 217-400 (NLSLLCDVLV…VFGIQINKEV (184 aa)). C322 serves as a coordination point for phytochromobilin. PAS domains lie at 620-690 (VTNE…LQGI) and 750-824 (IQGD…TKLS). One can recognise a Histidine kinase domain in the interval 904–1124 (YIRQELRNPL…IVLVEFPVAQ (221 aa)).

The protein belongs to the phytochrome family. Homodimer. In terms of processing, contains one covalently linked phytochromobilin chromophore.

Regulatory photoreceptor which exists in two forms that are reversibly interconvertible by light: the Pr form that absorbs maximally in the red region of the spectrum and the Pfr form that absorbs maximally in the far-red region. Photoconversion of Pr to Pfr induces an array of morphogenic responses, whereas reconversion of Pfr to Pr cancels the induction of those responses. Pfr controls the expression of a number of nuclear genes including those encoding the small subunit of ribulose-bisphosphate carboxylase, chlorophyll A/B binding protein, protochlorophyllide reductase, rRNA, etc. It also controls the expression of its own gene(s) in a negative feedback fashion. The chain is Phytochrome C (PHYC) from Oryza sativa subsp. indica (Rice).